The primary structure comprises 264 residues: Thiazole synthase (264 aa).

Lys-106 acts as the Schiff-base intermediate with DXP in catalysis. 1-deoxy-D-xylulose 5-phosphate is bound by residues Gly-167, 193 to 194, and 215 to 216; these read AG and NT.

It belongs to the ThiG family. As to quaternary structure, homotetramer. Forms heterodimers with either ThiH or ThiS.

Its subcellular location is the cytoplasm. It carries out the reaction [ThiS sulfur-carrier protein]-C-terminal-Gly-aminoethanethioate + 2-iminoacetate + 1-deoxy-D-xylulose 5-phosphate = [ThiS sulfur-carrier protein]-C-terminal Gly-Gly + 2-[(2R,5Z)-2-carboxy-4-methylthiazol-5(2H)-ylidene]ethyl phosphate + 2 H2O + H(+). Its pathway is cofactor biosynthesis; thiamine diphosphate biosynthesis. In terms of biological role, catalyzes the rearrangement of 1-deoxy-D-xylulose 5-phosphate (DXP) to produce the thiazole phosphate moiety of thiamine. Sulfur is provided by the thiocarboxylate moiety of the carrier protein ThiS. In vitro, sulfur can be provided by H(2)S. This is Thiazole synthase from Stenotrophomonas maltophilia (strain K279a).